Consider the following 181-residue polypeptide: Shikimate kinase 2 (181 aa).

12-17 (GCGKTT) contacts ATP. Mg(2+) is bound by residues Thr16 and Asp32. 3 residues coordinate substrate: Asp34, Arg58, and Gly79. The LID domain stretch occupies residues 112 to 126 (EAEPEADLRPTLTGK). Arg120 contacts ATP. Position 139 (Arg139) interacts with substrate.

It belongs to the shikimate kinase family. AroL subfamily. As to quaternary structure, monomer. It depends on Mg(2+) as a cofactor.

The protein resides in the cytoplasm. The catalysed reaction is shikimate + ATP = 3-phosphoshikimate + ADP + H(+). It participates in metabolic intermediate biosynthesis; chorismate biosynthesis; chorismate from D-erythrose 4-phosphate and phosphoenolpyruvate: step 5/7. Catalyzes the specific phosphorylation of the 3-hydroxyl group of shikimic acid using ATP as a cosubstrate. The sequence is that of Shikimate kinase 2 from Salmonella heidelberg (strain SL476).